Here is a 348-residue protein sequence, read N- to C-terminus: Flagellar P-ring protein (348 aa).

An N-terminal signal peptide occupies residues 1 to 16; sequence MRVLTIFLLFMTSIFA.

The protein belongs to the FlgI family. In terms of assembly, the basal body constitutes a major portion of the flagellar organelle and consists of four rings (L,P,S, and M) mounted on a central rod.

It is found in the periplasm. Its subcellular location is the bacterial flagellum basal body. Assembles around the rod to form the L-ring and probably protects the motor/basal body from shearing forces during rotation. The polypeptide is Flagellar P-ring protein (Campylobacter jejuni subsp. jejuni serotype O:6 (strain 81116 / NCTC 11828)).